A 116-amino-acid polypeptide reads, in one-letter code: Large ribosomal subunit protein bL19 (116 aa).

This sequence belongs to the bacterial ribosomal protein bL19 family.

Functionally, this protein is located at the 30S-50S ribosomal subunit interface and may play a role in the structure and function of the aminoacyl-tRNA binding site. The chain is Large ribosomal subunit protein bL19 from Magnetococcus marinus (strain ATCC BAA-1437 / JCM 17883 / MC-1).